We begin with the raw amino-acid sequence, 85 residues long: Small ribosomal subunit protein bS16 (85 aa).

The protein belongs to the bacterial ribosomal protein bS16 family.

The protein is Small ribosomal subunit protein bS16 of Xanthomonas euvesicatoria pv. vesicatoria (strain 85-10) (Xanthomonas campestris pv. vesicatoria).